We begin with the raw amino-acid sequence, 202 residues long: Glycerol-3-phosphate acyltransferase (202 aa).

5 helical membrane passes run 6 to 26, 56 to 76, 82 to 102, 118 to 138, and 141 to 161; these read LTLG…AVLV, SAAL…YIAF, SVSL…PIFF, APIG…MVLI, and YSSL…WYLD.

This sequence belongs to the PlsY family. In terms of assembly, probably interacts with PlsX.

It is found in the cell inner membrane. It carries out the reaction an acyl phosphate + sn-glycerol 3-phosphate = a 1-acyl-sn-glycero-3-phosphate + phosphate. It participates in lipid metabolism; phospholipid metabolism. In terms of biological role, catalyzes the transfer of an acyl group from acyl-phosphate (acyl-PO(4)) to glycerol-3-phosphate (G3P) to form lysophosphatidic acid (LPA). This enzyme utilizes acyl-phosphate as fatty acyl donor, but not acyl-CoA or acyl-ACP. This Shewanella woodyi (strain ATCC 51908 / MS32) protein is Glycerol-3-phosphate acyltransferase.